A 470-amino-acid chain; its full sequence is Poly(A) polymerase catalytic subunit (470 aa).

Catalysis depends on residues Asp192 and Asp194.

The protein belongs to the poxviridae poly(A) polymerase catalytic subunit family. As to quaternary structure, heterodimer of a large (catalytic) subunit and a small (regulatory) subunit.

The enzyme catalyses RNA(n) + ATP = RNA(n)-3'-adenine ribonucleotide + diphosphate. Functionally, polymerase that creates the 3'-poly(A) tail of mRNA's. This is Poly(A) polymerase catalytic subunit (PAPL) from Myxoma virus (strain Lausanne) (MYXV).